The sequence spans 379 residues: MAKRDYYETLGCDRGADDTVLKASYRKLAMKWHPDRSQGNGEAEVMFKEVNEAYEVLKDPQKRAAYDRFGHAAFENGGGGGPGFGNDFASSFADIFDDLFGGAMNRGRGGGQQRGRGADLRYNMEITLEEAFSGKTAQIKIPTSVSCETCSGTGAKPGTQPKACRMCGGAGKIRHAQGFFTLERTCPNCQGRGSVIEDPCSDCGGAGRVTRERNLSVQIPAGVEDGTRIRLGGEGEAGVRGGAAGDLYIFLSIEPHTFFQREGADLYCRVPISMVTAALGGTVEVPTIDGDKSKVKIPEGTQSQKRFRLSGKGMPIMRARNHGDMYVQVVVETPQKLTKRQKELLAEFEKDSSGETHPESTGFFAKVKEFFQGAAGEGA.

Residues 5–70 (DYYETLGCDR…QKRAAYDRFG (66 aa)) enclose the J domain. A CR-type zinc finger spans residues 134–212 (GKTAQIKIPT…CGGAGRVTRE (79 aa)). Positions 147, 150, 164, 167, 186, 189, 200, and 203 each coordinate Zn(2+). CXXCXGXG motif repeat units follow at residues 147–154 (CETCSGTG), 164–171 (CRMCGGAG), 186–193 (CPNCQGRG), and 200–207 (CSDCGGAG).

It belongs to the DnaJ family. Homodimer. Zn(2+) serves as cofactor.

Its subcellular location is the cytoplasm. In terms of biological role, participates actively in the response to hyperosmotic and heat shock by preventing the aggregation of stress-denatured proteins and by disaggregating proteins, also in an autonomous, DnaK-independent fashion. Unfolded proteins bind initially to DnaJ; upon interaction with the DnaJ-bound protein, DnaK hydrolyzes its bound ATP, resulting in the formation of a stable complex. GrpE releases ADP from DnaK; ATP binding to DnaK triggers the release of the substrate protein, thus completing the reaction cycle. Several rounds of ATP-dependent interactions between DnaJ, DnaK and GrpE are required for fully efficient folding. Also involved, together with DnaK and GrpE, in the DNA replication of plasmids through activation of initiation proteins. This Xanthobacter autotrophicus (strain ATCC BAA-1158 / Py2) protein is Chaperone protein DnaJ.